Reading from the N-terminus, the 466-residue chain is Ribulose bisphosphate carboxylase large chain (466 aa).

N6,N6,N6-trimethyllysine is present on Lys-5. Residues Asn-114 and Thr-164 each coordinate substrate. Lys-166 serves as the catalytic Proton acceptor. Lys-168 serves as a coordination point for substrate. Mg(2+)-binding residues include Lys-192, Asp-194, and Glu-195. Position 192 is an N6-carboxylysine (Lys-192). His-285 functions as the Proton acceptor in the catalytic mechanism. 3 residues coordinate substrate: Arg-286, His-318, and Ser-370.

Belongs to the RuBisCO large chain family. Type I subfamily. In terms of assembly, heterohexadecamer of 8 large chains and 8 small chains; disulfide-linked. The disulfide link is formed within the large subunit homodimers. It depends on Mg(2+) as a cofactor. The disulfide bond which can form in the large chain dimeric partners within the hexadecamer appears to be associated with oxidative stress and protein turnover.

The protein localises to the plastid. It localises to the chloroplast. The enzyme catalyses 2 (2R)-3-phosphoglycerate + 2 H(+) = D-ribulose 1,5-bisphosphate + CO2 + H2O. It carries out the reaction D-ribulose 1,5-bisphosphate + O2 = 2-phosphoglycolate + (2R)-3-phosphoglycerate + 2 H(+). RuBisCO catalyzes two reactions: the carboxylation of D-ribulose 1,5-bisphosphate, the primary event in carbon dioxide fixation, as well as the oxidative fragmentation of the pentose substrate in the photorespiration process. Both reactions occur simultaneously and in competition at the same active site. The protein is Ribulose bisphosphate carboxylase large chain of Oxalis dillenii (Gray-green wood sorrel).